The primary structure comprises 394 residues: Aspergillopepsin-1 (394 aa).

Residues 1–20 (MVVFSKVTAAVFGLATIASA) form the signal peptide. A propeptide spans 21–69 (APAPPTRKGFTVQQQARPAQKKQVNLPAMYAHALTKFGGSVPESVKVAA) (activation peptide). A Peptidase A1 domain is found at 85–391 (YLTPVNVGGT…DSEGPRLGFA (307 aa)). Residues Asp101 and Asp283 contribute to the active site. Cysteines 319 and 354 form a disulfide.

Belongs to the peptidase A1 family. Monomer.

It is found in the secreted. It carries out the reaction Hydrolysis of proteins with broad specificity. Generally favors hydrophobic residues in P1 and P1', but also accepts Lys in P1, which leads to activation of trypsinogen. Does not clot milk.. Its function is as follows. Secreted aspartic endopeptidase that allows assimilation of proteinaceous substrates. The scissile peptide bond is attacked by a nucleophilic water molecule activated by two aspartic residues in the active site. Shows a broad primary substrate specificity. Favors hydrophobic residues at the P1 and P1' positions, but also accepts a lysine residue in the P1 position, leading to the activation of trypsinogen and chymotrypsinogen A. The polypeptide is Aspergillopepsin-1 (pepA) (Aspergillus clavatus (strain ATCC 1007 / CBS 513.65 / DSM 816 / NCTC 3887 / NRRL 1 / QM 1276 / 107)).